Consider the following 350-residue polypeptide: 4-hydroxy-2-oxovalerate aldolase 3 (350 aa).

Positions 13–265 (VVFHDMCLRD…DTGVDLFRLM (253 aa)) constitute a Pyruvate carboxyltransferase domain. 21-22 (RD) is a binding site for substrate. Mn(2+) is bound at residue Asp22. The active-site Proton acceptor is His25. Substrate-binding residues include Ser175 and His204. Mn(2+)-binding residues include His204 and His206. Tyr295 lines the substrate pocket.

It belongs to the 4-hydroxy-2-oxovalerate aldolase family.

The catalysed reaction is (S)-4-hydroxy-2-oxopentanoate = acetaldehyde + pyruvate. In Azotobacter vinelandii (strain DJ / ATCC BAA-1303), this protein is 4-hydroxy-2-oxovalerate aldolase 3 (lapG).